A 188-amino-acid polypeptide reads, in one-letter code: UPF0314 protein Sala_3154 (188 aa).

3 helical membrane passes run threonine 8–glycine 28, tryptophan 57–methionine 77, and methionine 143–isoleucine 163.

It belongs to the UPF0314 family.

It is found in the cell membrane. This chain is UPF0314 protein Sala_3154, found in Sphingopyxis alaskensis (strain DSM 13593 / LMG 18877 / RB2256) (Sphingomonas alaskensis).